We begin with the raw amino-acid sequence, 475 residues long: 23S rRNA (uracil(1939)-C(5))-methyltransferase RlmD (475 aa).

A TRAM domain is found at 1-76 (MHRGDKPVNI…SRFSKAKVRE (76 aa)). 4 residues coordinate [4Fe-4S] cluster: cysteine 89, cysteine 95, cysteine 98, and cysteine 178. The S-adenosyl-L-methionine site is built by glutamine 299, phenylalanine 328, asparagine 333, glutamate 349, aspartate 377, and aspartate 398. The active-site Nucleophile is the cysteine 431.

It belongs to the class I-like SAM-binding methyltransferase superfamily. RNA M5U methyltransferase family. RlmD subfamily.

It catalyses the reaction uridine(1939) in 23S rRNA + S-adenosyl-L-methionine = 5-methyluridine(1939) in 23S rRNA + S-adenosyl-L-homocysteine + H(+). Functionally, catalyzes the formation of 5-methyl-uridine at position 1939 (m5U1939) in 23S rRNA. The protein is 23S rRNA (uracil(1939)-C(5))-methyltransferase RlmD of Polynucleobacter necessarius subsp. necessarius (strain STIR1).